Here is a 1063-residue protein sequence, read N- to C-terminus: Coiled-coil domain-containing protein 187 (1063 aa).

Disordered regions lie at residues 1-41 (MPTL…AADW), 62-184 (RWPG…SRLH), 219-278 (RVEA…KDED), 300-319 (PPPV…PALT), 392-484 (RKGG…ERLG), 496-539 (GQAC…ATQP), and 551-658 (WEDP…LEEK). Positions 111–124 (SSVSSGRLSCSSGG) are enriched in low complexity. Residues 146–160 (RKSDARLEQLRDKIR) show a composition bias toward basic and acidic residues. Residues 163-181 (AWQQGSCASLGTSAPSSAS) show a composition bias toward polar residues. The segment covering 219–233 (RVEAKASHGQGRELS) has biased composition (basic and acidic residues). 2 stretches are compositionally biased toward basic and acidic residues: residues 431-442 (TERKHSSLERAR) and 472-484 (SFQR…ERLG). Positions 508–517 (QRQGPSSQRP) are enriched in low complexity. A coiled-coil region spans residues 816 to 851 (HLRHKQAQLQALETTAKVLKQRVDSLTAKLQGAEAL). The disordered stretch occupies residues 1010 to 1030 (PRSCGKGDPADRPWAGWSGGR).

The sequence is that of Coiled-coil domain-containing protein 187 from Homo sapiens (Human).